Here is a 253-residue protein sequence, read N- to C-terminus: 3-deoxy-manno-octulosonate cytidylyltransferase (253 aa).

The protein belongs to the KdsB family.

Its subcellular location is the cytoplasm. It catalyses the reaction 3-deoxy-alpha-D-manno-oct-2-ulosonate + CTP = CMP-3-deoxy-beta-D-manno-octulosonate + diphosphate. It functions in the pathway nucleotide-sugar biosynthesis; CMP-3-deoxy-D-manno-octulosonate biosynthesis; CMP-3-deoxy-D-manno-octulosonate from 3-deoxy-D-manno-octulosonate and CTP: step 1/1. Its pathway is bacterial outer membrane biogenesis; lipopolysaccharide biosynthesis. Functionally, activates KDO (a required 8-carbon sugar) for incorporation into bacterial lipopolysaccharide in Gram-negative bacteria. This Acinetobacter baumannii (strain ATCC 17978 / DSM 105126 / CIP 53.77 / LMG 1025 / NCDC KC755 / 5377) protein is 3-deoxy-manno-octulosonate cytidylyltransferase.